Reading from the N-terminus, the 127-residue chain is Small ribosomal subunit protein bS16 (127 aa).

Residues 80–127 (GLKKRPTRNNPHKGEPGKKAQERIAAAKQAAEEAAAAKTESAPISEEV) form a disordered region. Over residues 81-90 (LKKRPTRNNP) the composition is skewed to basic residues. Over residues 91–101 (HKGEPGKKAQE) the composition is skewed to basic and acidic residues. Over residues 102–121 (RIAAAKQAAEEAAAAKTESA) the composition is skewed to low complexity.

Belongs to the bacterial ribosomal protein bS16 family.

The polypeptide is Small ribosomal subunit protein bS16 (Bartonella henselae (strain ATCC 49882 / DSM 28221 / CCUG 30454 / Houston 1) (Rochalimaea henselae)).